Consider the following 207-residue polypeptide: Ribonuclease HII (207 aa).

The RNase H type-2 domain maps to 20–207 (QLFAGVDEVG…KPVKRVLGIE (188 aa)). Residues aspartate 26, glutamate 27, and aspartate 118 each contribute to the a divalent metal cation site.

The protein belongs to the RNase HII family. Mn(2+) serves as cofactor. Mg(2+) is required as a cofactor.

The protein resides in the cytoplasm. It catalyses the reaction Endonucleolytic cleavage to 5'-phosphomonoester.. Its function is as follows. Endonuclease that specifically degrades the RNA of RNA-DNA hybrids. This chain is Ribonuclease HII, found in Aliivibrio fischeri (strain ATCC 700601 / ES114) (Vibrio fischeri).